Consider the following 566-residue polypeptide: Amino acid transporter 6-1 (566 aa).

11 helical membrane-spanning segments follow: residues 65–85, 137–157, 158–178, 187–207, 216–236, 250–270, 334–354, 367–387, 392–412, 423–443, and 455–475; these read YVLL…FYGW, MTFA…DWLG, PLWT…FLAF, YPAL…TLCI, GLII…PLVL, VSIG…LLFM, FFSI…WATS, DVVS…ILLG, VVGI…TYVF, LSAC…YVYV, and LIGI…PLYE. N476 is a glycosylation site (N-linked (GlcNAc...) asparagine). Residues 489–509 traverse the membrane as a helical segment; the sequence is IQIAMTALLCVQYVWIFILGF.

Belongs to the SLC43A transporter (TC 2.A.1.44) family.

It is found in the cell membrane. It carries out the reaction L-lysine(in) = L-lysine(out). The catalysed reaction is L-arginine(in) = L-arginine(out). The enzyme catalyses L-methionine(in) = L-methionine(out). It catalyses the reaction L-leucine(in) = L-leucine(out). Cationic and neutral amino acid transporter. Transports lysine with high affinity. Can transport arginine, methionine and leucine. Does not require inorganic ions, such as sodium, chloride, potassium, calcium or magnesium, for transport activity. This is Amino acid transporter 6-1 from Toxoplasma gondii (strain ATCC 50611 / Me49).